Reading from the N-terminus, the 211-residue chain is Transcriptional regulator GfcR (211 aa).

It belongs to the purine/pyrimidine phosphoribosyltransferase family. GfcR subfamily.

Its function is as follows. DNA-binding transcriptional regulator that functions as a regulator of central sugar catabolic pathways. This Halorubrum lacusprofundi (strain ATCC 49239 / DSM 5036 / JCM 8891 / ACAM 34) protein is Transcriptional regulator GfcR.